Here is a 394-residue protein sequence, read N- to C-terminus: ORC1-type DNA replication protein 3 (394 aa).

ATP is bound by residues 66–70 (TGKTF) and tyrosine 207.

It belongs to the CDC6/cdc18 family. As to quaternary structure, monomer. Interacts with Cdc6-1, Cdc6-2, MCM and PolB1.

Its function is as follows. Involved in regulation of DNA replication. May play essential roles in origin recognition and cell cycle control of replication. Binds to DNA, with a preference for molecules that contain a bubble, a fork, or a tail. Inhibits the binding of the MCM helicase to the origin DNA and inhibits its DNA helicase activity. Also regulates the DNA polymerase and the nuclease activities of PolB1. Inhibits the DNA-binding activity of Cdc6-1 and Cdc6-2. The chain is ORC1-type DNA replication protein 3 (cdc6-3) from Saccharolobus solfataricus (strain ATCC 35092 / DSM 1617 / JCM 11322 / P2) (Sulfolobus solfataricus).